A 112-amino-acid chain; its full sequence is Large ribosomal subunit protein uL22 (112 aa).

The protein belongs to the universal ribosomal protein uL22 family. As to quaternary structure, part of the 50S ribosomal subunit.

In terms of biological role, this protein binds specifically to 23S rRNA; its binding is stimulated by other ribosomal proteins, e.g. L4, L17, and L20. It is important during the early stages of 50S assembly. It makes multiple contacts with different domains of the 23S rRNA in the assembled 50S subunit and ribosome. Functionally, the globular domain of the protein is located near the polypeptide exit tunnel on the outside of the subunit, while an extended beta-hairpin is found that lines the wall of the exit tunnel in the center of the 70S ribosome. In Nitratidesulfovibrio vulgaris (strain ATCC 29579 / DSM 644 / CCUG 34227 / NCIMB 8303 / VKM B-1760 / Hildenborough) (Desulfovibrio vulgaris), this protein is Large ribosomal subunit protein uL22.